The primary structure comprises 340 residues: Zinc finger protein 367 (340 aa).

Residues 96–140 (LPTLRGAPPSSASVAAVSGGEDEEEASSPDSGHLKDGIRRGRPRA) are disordered. Residues 101–114 (GAPPSSASVAAVSG) show a composition bias toward low complexity. Basic and acidic residues predominate over residues 127 to 140 (GHLKDGIRRGRPRA). 2 consecutive C2H2-type zinc fingers follow at residues 157–179 (IRCN…KRTH) and 185–209 (YLCD…QRLH). Residues 280 to 317 (KGKLVQKADQEQQDPLEYLQSDEEDDEKSGAQRRLQEQ) form a disordered region. A coiled-coil region spans residues 299-332 (QSDEEDDEKSGAQRRLQEQRERLHGALALIELAN). S300 bears the Phosphoserine mark. Basic and acidic residues predominate over residues 307–317 (KSGAQRRLQEQ).

The protein belongs to the krueppel C2H2-type zinc-finger protein family.

The protein resides in the nucleus. Functionally, transcriptional activator. May be involved in transcriptional activation of erythroid genes. This chain is Zinc finger protein 367 (Znf367), found in Rattus norvegicus (Rat).